Here is a 584-residue protein sequence, read N- to C-terminus: Kinesin-like protein KIN-10C (584 aa).

A Kinesin motor domain is found at 11 to 324 (PVRVVLRVRP…VSLAARSRHV (314 aa)). 99-106 (GATGSGKT) provides a ligand contact to ATP. Disordered stretches follow at residues 377–398 (SMSH…AMDQ) and 445–469 (DKTG…KQRT).

The protein belongs to the TRAFAC class myosin-kinesin ATPase superfamily. Kinesin family. KIN-10 subfamily.

The sequence is that of Kinesin-like protein KIN-10C from Oryza sativa subsp. japonica (Rice).